The sequence spans 434 residues: MASVRETGVNVSNDGITVVLGSQWGDEGKGKLVDILCDNVDVCARCQGGNNAGHTIVANGVTYDFHILPSGLVNPKCQNLIGSGVVVYLPAFFSELEKLEQKGLKCRDRIFISDRAHLVFDYHQRADALNEAELGKQSIGTTGKGIGPAYSTKATRSGIRVHHLYHWAEFEARYRKNVADLQKRYGAFEYDVEAELIRYKELAQRLKPFVIDAVAFMYEALQSKKRILVEGANALMLDLDFGTYPFVTSSNTTVGGVCTGLGVPPQRIANSIGVVKAYTTRVGAGPFPTEQLNEIGDHLQSVGREVGVTTGRKRRCGWLDLVVVKYSTMINGYTSLNLTKLDILDALDEIKVAVAYIINGKRIETFPADLDSLEEAEIVYETFPGWKVPTTGITHWDQMPENAKKYIEFIEKFVGVPITFIGVGPGRDEMLVKE.

Residues 25-31 and 53-55 contribute to the GTP site; these read GDEGKGK and GHT. Asp-26 serves as the catalytic Proton acceptor. Asp-26 and Gly-53 together coordinate Mg(2+). Residues 26–29, 51–54, Thr-142, Arg-156, Asn-233, Thr-248, and Arg-312 contribute to the IMP site; these read DEGK and NAGH. His-54 acts as the Proton donor in catalysis. 308 to 314 is a binding site for substrate; the sequence is VTTGRKR. GTP contacts are provided by residues Arg-314, 340–342, and 422–424; these read KLD and GVG.

Belongs to the adenylosuccinate synthetase family. As to quaternary structure, homodimer. It depends on Mg(2+) as a cofactor.

It localises to the cytoplasm. The enzyme catalyses IMP + L-aspartate + GTP = N(6)-(1,2-dicarboxyethyl)-AMP + GDP + phosphate + 2 H(+). It participates in purine metabolism; AMP biosynthesis via de novo pathway; AMP from IMP: step 1/2. Its activity is regulated as follows. Competitively Inhibited by GMP. Allosterically inhibited by AMP. In terms of biological role, plays an important role in the de novo pathway and in the salvage pathway of purine nucleotide biosynthesis. Catalyzes the first committed step in the biosynthesis of AMP from IMP. This chain is Adenylosuccinate synthetase (ade2), found in Schizosaccharomyces pombe (strain 972 / ATCC 24843) (Fission yeast).